A 473-amino-acid polypeptide reads, in one-letter code: Vasculin (473 aa).

5 disordered regions span residues 1-26 (MAQH…SLNF), 44-163 (RRRH…EYPP), 196-240 (SQPV…SFPH), 258-286 (NFSP…QQPR), and 305-342 (LKRD…QERD). Ser49 is subject to Phosphoserine. Arg87 carries the omega-N-methylarginine modification. The span at 93-107 (GSSRSRSSIFHSGKS) shows a compositional bias: low complexity. Basic and acidic residues predominate over residues 119–133 (ETGRKDDKRERKQFE). Ser274, Ser276, Ser322, and Ser381 each carry phosphoserine. A compositionally biased stretch (basic and acidic residues) spans 305-329 (LKRDRVEEEHEDESHVGSEKDDDSF). The disordered stretch occupies residues 444–473 (GPWKNSTFKPTIENDDTETSSSDTSDDDDV). Residues 456 to 473 (ENDDTETSSSDTSDDDDV) are compositionally biased toward acidic residues.

It belongs to the vasculin family. As to quaternary structure, interacts with GTF2B, GTF2F2, RNA polymerase II and TBP.

Its subcellular location is the nucleus. Functionally, functions as a GC-rich promoter-specific transactivating transcription factor. This is Vasculin (GPBP1) from Bos taurus (Bovine).